The sequence spans 105 residues: MIPGEVQVAAGDIELNSGRETVSATVANHGDRPVQVGSHYHFFEVNEALVFDRAPTLGFRLDIPAGTAVRFEPGQARTVQLVAYAGKREVYGFQGKVMGALEGRA.

It belongs to the urease beta subunit family. As to quaternary structure, heterotrimer of UreA (gamma), UreB (beta) and UreC (alpha) subunits. Three heterotrimers associate to form the active enzyme.

It is found in the cytoplasm. The catalysed reaction is urea + 2 H2O + H(+) = hydrogencarbonate + 2 NH4(+). The protein operates within nitrogen metabolism; urea degradation; CO(2) and NH(3) from urea (urease route): step 1/1. The protein is Urease subunit beta of Pseudomonas putida (strain GB-1).